A 248-amino-acid polypeptide reads, in one-letter code: Ribosomal RNA small subunit methyltransferase G (248 aa).

Residues glycine 85, phenylalanine 90, 108–110 (DSS), 137–138 (AE), and arginine 156 each bind S-adenosyl-L-methionine.

The protein belongs to the methyltransferase superfamily. RNA methyltransferase RsmG family.

It localises to the cytoplasm. Its function is as follows. Specifically methylates the N7 position of a guanine in 16S rRNA. In Prochlorococcus marinus (strain NATL1A), this protein is Ribosomal RNA small subunit methyltransferase G.